The chain runs to 527 residues: Acyl-coenzyme A thioesterase 4, mitochondrial (527 aa).

The transit peptide at 1–75 (MMTPIGIRIR…FLFDPPPIRF (75 aa)) directs the protein to the mitochondrion. 2 HotDog ACOT-type domains span residues 172 to 294 (ILYN…RDSK) and 370 to 487 (KDTC…GPEA).

The protein belongs to the acyl coenzyme A hydrolase family. Mostly expressed at low levels in glandular trichomes (lupulin glands), and, to a lower extent, in stems, leaves, flowers and cones.

Its subcellular location is the mitochondrion. It carries out the reaction 2-methylpropanoyl-CoA + H2O = 2-methylpropanoate + CoA + H(+). The enzyme catalyses propanoyl-CoA + H2O = propanoate + CoA + H(+). It catalyses the reaction octanoyl-CoA + H2O = octanoate + CoA + H(+). The catalysed reaction is butanoyl-CoA + H2O = butanoate + CoA + H(+). It carries out the reaction 3-methylbutanoyl-CoA + H2O = 3-methylbutanoate + CoA + H(+). The enzyme catalyses 2-methylbutanoyl-CoA + H2O = 2-methylbutanoate + CoA + H(+). In terms of biological role, acyl-CoA thioesterases are a group of enzymes that catalyze the hydrolysis of acyl-CoAs to the free fatty acid and coenzyme A (CoASH), providing the potential to regulate intracellular levels of acyl-CoAs, free fatty acids and CoASH. Active on acyl CoAs with short chains (propanoyl-CoA and butanoyl-CoA), branched short chains (2-methylpropanoyl-CoA, 2-methylbutanoyl-CoA and 3-methylbutanoyl-CoA) and medium chains (octanoyl-CoA). This Humulus lupulus (European hop) protein is Acyl-coenzyme A thioesterase 4, mitochondrial.